Here is a 334-residue protein sequence, read N- to C-terminus: YbbR-like domain-containing protein BB_0009 (334 aa).

Residues 22-38 (AISILIAILMFVAFNFN) form a helical membrane-spanning segment. 2 YbbR-like domains span residues 43-128 (ITTE…NVLL) and 138-220 (VKIE…VVNI).

It is found in the membrane. This is YbbR-like domain-containing protein BB_0009 from Borreliella burgdorferi (strain ATCC 35210 / DSM 4680 / CIP 102532 / B31) (Borrelia burgdorferi).